Consider the following 138-residue polypeptide: MDSNALIKRCSSSKNKINGLKVPTVTIKVEEVCLVKSNLKIARKNLKKIEKIYDDLNLINPKQLKGINGLINPLLHTIYYEVWFMFMDDIVHIQKNLIDYFEYANKGEEQPIKNNEFVDKIKMLMKPISVDLSTPSKA.

It belongs to the IIV-3 015R family.

This is an uncharacterized protein from Simulium iridescent virus (IIV-22).